Reading from the N-terminus, the 399-residue chain is Argininosuccinate synthase (399 aa).

Alanine 9 to serine 17 provides a ligand contact to ATP. Position 87 (tyrosine 87) interacts with L-citrulline. Position 117 (glycine 117) interacts with ATP. L-aspartate-binding residues include threonine 119, asparagine 123, and aspartate 124. Asparagine 123 lines the L-citrulline pocket. Positions 127, 176, 185, 261, and 273 each coordinate L-citrulline.

It belongs to the argininosuccinate synthase family. Type 1 subfamily. In terms of assembly, homotetramer.

The protein localises to the cytoplasm. The enzyme catalyses L-citrulline + L-aspartate + ATP = 2-(N(omega)-L-arginino)succinate + AMP + diphosphate + H(+). Its pathway is amino-acid biosynthesis; L-arginine biosynthesis; L-arginine from L-ornithine and carbamoyl phosphate: step 2/3. The protein is Argininosuccinate synthase of Chlorobium chlorochromatii (strain CaD3).